The following is a 1083-amino-acid chain: Ubiquitin-protein ligase E3C (1083 aa).

2 stretches are compositionally biased toward basic and acidic residues: residues 1–10 (MFSFEGDFKT) and 20–40 (SRKEEKASLLHRTQEERRKRE). A disordered region spans residues 1–40 (MFSFEGDFKTRPKVSLGGASRKEEKASLLHRTQEERRKRE). A cis-determinant of acceptor ubiquitin-binding region spans residues 1-60 (MFSFEGDFKTRPKVSLGGASRKEEKASLLHRTQEERRKREEERRRLKNAVIIQSFIRGYR). The region spanning 45 to 74 (RLKNAVIIQSFIRGYRDRKQQYFIQRSAFD) is the IQ domain. The segment at 354–386 (ASPTGTGCPDSTSDSEDDNEETDQPNSPEDGRV) is disordered. Residues 366–376 (SDSEDDNEETD) are compositionally biased toward acidic residues. Residues 744-1083 (NEPDLKKRIR…IECAAGFELS (340 aa)) form the HECT domain. Lysine 903 is covalently cross-linked (Glycyl lysine isopeptide (Lys-Gly) (interchain with G-Cter in ubiquitin); by autocatalysis). Catalysis depends on cysteine 1051, which acts as the Glycyl thioester intermediate.

Belongs to the UBE3C family. As to quaternary structure, interacts with 26S proteasomes. Interacts (via the HECT domain) with UBE2D1 and, less efficiently, with UBE2L3. Autoubiquitinated; promoting its own degradation.

It catalyses the reaction S-ubiquitinyl-[E2 ubiquitin-conjugating enzyme]-L-cysteine + [acceptor protein]-L-lysine = [E2 ubiquitin-conjugating enzyme]-L-cysteine + N(6)-ubiquitinyl-[acceptor protein]-L-lysine.. The protein operates within protein modification; protein ubiquitination. In terms of biological role, E3 ubiquitin-protein ligase that specifically catalyzes 'Lys-29'- and 'Lys-48'-linked polyubiquitin chains. Accepts ubiquitin from the E2 ubiquitin-conjugating enzyme UBE2D1 in the form of a thioester and then directly transfers the ubiquitin to targeted substrates. Associates with the proteasome and promotes elongation of ubiquitin chains on substrates bound to the 26S proteasome. Also catalyzes 'Lys-29'- and 'Lys-48'-linked ubiquitination of 26S proteasome subunit ADRM1/RPN13 in response to proteotoxic stress, impairing the ability of the proteasome to bind and degrade ubiquitin-conjugated proteins. Acts as a negative regulator of autophagy by mediating 'Lys-29'- and 'Lys-48'-linked ubiquitination of PIK3C3/VPS34, promoting its degradation. Can assemble unanchored poly-ubiquitin chains in either 'Lys-29'- or 'Lys-48'-linked polyubiquitin chains; with some preference for 'Lys-48' linkages. Acts as a negative regulator of type I interferon by mediating 'Lys-48'-linked ubiquitination of IRF3 and IRF7, leading to their degradation by the proteasome. Catalyzes ubiquitination and degradation of CAND2. The polypeptide is Ubiquitin-protein ligase E3C (Mus musculus (Mouse)).